The following is a 383-amino-acid chain: BRISC and BRCA1-A complex member 2 (383 aa).

The residue at position 1 (M1) is an N-acetylmethionine. A Phosphoserine modification is found at S2. UEV-like regions lie at residues 30–147 (DATN…TLLE) and 275–364 (IAAF…RAKA).

It belongs to the BABAM2 family. As to quaternary structure, component of the ARISC complex, at least composed of UIMC1/RAP80, ABRAXAS1, BRCC3/BRCC36, BABAM2 and BABAM1/NBA1. Component of the BRCA1-A complex, at least composed of BRCA1, BARD1, UIMC1/RAP80, ABRAXAS1, BRCC3/BRCC36, BABAM2 and BABAM1/NBA1. In the BRCA1-A complex, interacts directly with ABRAXAS1, BRCC3/BRCC36 and BABAM1/NBA1. Binds polyubiquitin. Component of the BRISC complex, at least composed of ABRAXAS2, BRCC3/BRCC36, BABAM2 and BABAM1/NBA1. Identified in a complex with SHMT2 and the other subunits of the BRISC complex. Component of the BRCA1/BRCA2 containing complex (BRCC), which also contains BRCA1, BRCA2, BARD1, BRCC3/BRCC36 and RAD51. BRCC is a ubiquitin E3 ligase complex that enhances cellular survival following DNA damage. May interact with FAS and TNFRSF1A. In terms of tissue distribution, expressed in brain, heart, kidney, liver, lung, testis, germinal center B-cells and various mouse cell lines.

It localises to the cytoplasm. Its subcellular location is the nucleus. Component of the BRCA1-A complex, a complex that specifically recognizes 'Lys-63'-linked ubiquitinated histones H2A and H2AX at DNA lesions sites, leading to target the BRCA1-BARD1 heterodimer to sites of DNA damage at double-strand breaks (DSBs). The BRCA1-A complex also possesses deubiquitinase activity that specifically removes 'Lys-63'-linked ubiquitin on histones H2A and H2AX. In the BRCA1-A complex, it acts as an adapter that bridges the interaction between BABAM1/NBA1 and the rest of the complex, thereby being required for the complex integrity and modulating the E3 ubiquitin ligase activity of the BRCA1-BARD1 heterodimer. Probably also plays a role as a component of the BRISC complex, a multiprotein complex that specifically cleaves 'Lys-63'-linked ubiquitin. May regulate TNF-alpha signaling through its interactions with TNFRSF1A. Functionally, component of the BRCA1-A complex, a complex that specifically recognizes 'Lys-63'-linked ubiquitinated histones H2A and H2AX at DNA lesions sites, leading to target the BRCA1-BARD1 heterodimer to sites of DNA damage at double-strand breaks (DSBs). The BRCA1-A complex also possesses deubiquitinase activity that specifically removes 'Lys-63'-linked ubiquitin on histones H2A and H2AX. In the BRCA1-A complex, it acts as an adapter that bridges the interaction between BABAM1/NBA1 and the rest of the complex, thereby being required for the complex integrity and modulating the E3 ubiquitin ligase activity of the BRCA1-BARD1 heterodimer. Component of the BRISC complex, a multiprotein complex that specifically cleaves 'Lys-63'-linked ubiquitin in various substrates. Within the BRISC complex, acts as an adapter that bridges the interaction between BABAM1/NBA1 and the rest of the complex, thereby being required for the complex integrity. The BRISC complex is required for normal mitotic spindle assembly and microtubule attachment to kinetochores via its role in deubiquitinating NUMA1. The BRISC complex plays a role in interferon signaling via its role in the deubiquitination of the interferon receptor IFNAR1; deubiquitination increases IFNAR1 activity by enhancing its stability and cell surface expression. Down-regulates the response to bacterial lipopolysaccharide (LPS) via its role in IFNAR1 deubiquitination. May play a role in homeostasis or cellular differentiation in cells of neural, epithelial and germline origins. May also act as a death receptor-associated anti-apoptotic protein, which inhibits the mitochondrial apoptotic pathway. May regulate TNF-alpha signaling through its interactions with TNFRSF1A; however these effects may be indirect. The sequence is that of BRISC and BRCA1-A complex member 2 (Babam2) from Mus musculus (Mouse).